The chain runs to 290 residues: Eukaryotic translation initiation factor 3 subunit G (290 aa).

Over residues 1 to 12 (MADSKQSNRDWA) the composition is skewed to basic and acidic residues. 2 disordered regions span residues 1-30 (MADS…STDA) and 173-192 (AGET…ATGA). An RRM domain is found at 204-285 (PTLRVTSLSI…LILEVAWSQP (82 aa)).

The protein belongs to the eIF-3 subunit G family. As to quaternary structure, component of the eukaryotic translation initiation factor 3 (eIF-3) complex.

The protein resides in the cytoplasm. RNA-binding component of the eukaryotic translation initiation factor 3 (eIF-3) complex, which is involved in protein synthesis of a specialized repertoire of mRNAs and, together with other initiation factors, stimulates binding of mRNA and methionyl-tRNAi to the 40S ribosome. The eIF-3 complex specifically targets and initiates translation of a subset of mRNAs involved in cell proliferation. This subunit can bind 18S rRNA. This is Eukaryotic translation initiation factor 3 subunit G from Cryptococcus neoformans var. neoformans serotype D (strain B-3501A) (Filobasidiella neoformans).